A 251-amino-acid polypeptide reads, in one-letter code: uncharacterized protein (251 aa).

The interval 207–251 (ATPHSKRGRTKLYRKEPPGDNRSPPPWQEPHGEGLAEKLSPGPAR) is disordered.

This is an uncharacterized protein from Treponema pallidum (strain Nichols).